The following is an 890-amino-acid chain: Alanine--tRNA ligase (890 aa).

Zn(2+) is bound by residues His-573, His-577, Cys-676, and His-680.

This sequence belongs to the class-II aminoacyl-tRNA synthetase family. Requires Zn(2+) as cofactor.

The protein localises to the cytoplasm. It catalyses the reaction tRNA(Ala) + L-alanine + ATP = L-alanyl-tRNA(Ala) + AMP + diphosphate. Catalyzes the attachment of alanine to tRNA(Ala) in a two-step reaction: alanine is first activated by ATP to form Ala-AMP and then transferred to the acceptor end of tRNA(Ala). Also edits incorrectly charged Ser-tRNA(Ala) and Gly-tRNA(Ala) via its editing domain. The polypeptide is Alanine--tRNA ligase (Corynebacterium efficiens (strain DSM 44549 / YS-314 / AJ 12310 / JCM 11189 / NBRC 100395)).